The sequence spans 350 residues: MSQSSLSFQIEPVSKAQDQVIQQKIDLKTKPPGALGMLESLALQIARIQGPQQLQIVKPTMLVFAGDHGIAAEGVSIAPSEVTHQMVQNFAEGGAAINVFCRQLGLTLEVIDCGILTPVEGVEGIIDQRLGAGTGAIHLEPAMSLDCVDKGFAMARELIERHHQAGCNLVAFGEMGIGNTSSAAAIMAAIMQLEVADCVGRGTGINSETLARKLTLVELALLSHQSAMTGPKQVLACLGGFEIVQMTGAMLAAAERKMLVVVDGFIATAAALVAVTINANVRDYLIFAHRSEEQGHQRMLEHLQAKPLLSLGLRLGEGTGAALALPLIQAAANFYNQMASFSDAGIEAVV.

The Proton acceptor role is filled by E317.

It belongs to the CobT family.

The enzyme catalyses 5,6-dimethylbenzimidazole + nicotinate beta-D-ribonucleotide = alpha-ribazole 5'-phosphate + nicotinate + H(+). Its pathway is nucleoside biosynthesis; alpha-ribazole biosynthesis; alpha-ribazole from 5,6-dimethylbenzimidazole: step 1/2. Catalyzes the synthesis of alpha-ribazole-5'-phosphate from nicotinate mononucleotide (NAMN) and 5,6-dimethylbenzimidazole (DMB). The polypeptide is Nicotinate-nucleotide--dimethylbenzimidazole phosphoribosyltransferase (Shewanella oneidensis (strain ATCC 700550 / JCM 31522 / CIP 106686 / LMG 19005 / NCIMB 14063 / MR-1)).